The following is a 267-amino-acid chain: Sulfate transporter CysZ (267 aa).

A run of 4 helical transmembrane segments spans residues 29–49 (FVIMPILLNIVLLSGLFWLFI), 73–93 (ILLIFAILMILVLFYFVFTTL), 149–169 (IILFLLGFVPVLGQSVIPIIV), and 212–232 (GLVMLCTFIPLVNLVVIPVAV).

The protein belongs to the CysZ family.

It is found in the cell inner membrane. In terms of biological role, high affinity, high specificity proton-dependent sulfate transporter, which mediates sulfate uptake. Provides the sulfur source for the cysteine synthesis pathway. This is Sulfate transporter CysZ from Pasteurella multocida (strain Pm70).